We begin with the raw amino-acid sequence, 664 residues long: Putative carboxypeptidase suro-1 (664 aa).

The first 23 residues, 1 to 23 (MRYLCKSILLAVHTILLVGSVCC), serve as a signal peptide directing secretion. Residues 24 to 110 (STDVHNTDDK…MSVPDVEKLI (87 aa)) constitute a propeptide, activation peptide. A Peptidase M14 domain is found at 160 to 473 (DYASYADMVK…EGFREVVDAV (314 aa)). Zn(2+) contacts are provided by H219 and E222. Substrate is bound by residues 219-222 (HARE), R281, and 306-307 (NR). Residue H361 participates in Zn(2+) binding. Substrate is bound at residue 362-363 (SY). E437 acts as the Proton donor/acceptor in catalysis. The segment covering 512 to 543 (ASQAAGSTTRSTTTLKTSTTSVSTTSEATSPS) has biased composition (low complexity). The segment at 512–590 (ASQAAGSTTR…TTTTEEEDVT (79 aa)) is disordered. The segment covering 564–573 (PTPPMAPPIM) has biased composition (pro residues). Residues 574–583 (SPSTEFSTTT) show a composition bias toward low complexity. The region spanning 621–657 (CRDMRYSCGFWLKNNKQVCEEQQSFMRAQCAYTCKFC) is the ShKT domain. Disulfide bonds link C621/C657, C628/C650, and C639/C654.

This sequence belongs to the peptidase M14 family. The cofactor is Zn(2+). Localizes in stripes along the cuticle.

The protein localises to the cytoplasmic vesicle. The protein resides in the secreted. In terms of biological role, may play a role in processing or organization of cuticle collagen proteins, including rol-6 and col-19. This Caenorhabditis elegans protein is Putative carboxypeptidase suro-1.